Consider the following 372-residue polypeptide: Chaperone protein DnaJ (372 aa).

Residues 5–70 enclose the J domain; the sequence is DYYDLLEVSR…EKRAGYDRYG (66 aa). The CR-type zinc finger occupies 134–212; sequence GIQAPIHYVT…CGGSGRKRDE (79 aa). 8 residues coordinate Zn(2+): Cys147, Cys150, Cys164, Cys167, Cys186, Cys189, Cys200, and Cys203. CXXCXGXG motif repeat units lie at residues 147–154, 164–171, 186–193, and 200–207; these read CNTCQGTG, CNTCQGSG, CTTCYGEG, and CKKCGGSG.

The protein belongs to the DnaJ family. As to quaternary structure, homodimer. Zn(2+) serves as cofactor.

The protein localises to the cytoplasm. Participates actively in the response to hyperosmotic and heat shock by preventing the aggregation of stress-denatured proteins and by disaggregating proteins, also in an autonomous, DnaK-independent fashion. Unfolded proteins bind initially to DnaJ; upon interaction with the DnaJ-bound protein, DnaK hydrolyzes its bound ATP, resulting in the formation of a stable complex. GrpE releases ADP from DnaK; ATP binding to DnaK triggers the release of the substrate protein, thus completing the reaction cycle. Several rounds of ATP-dependent interactions between DnaJ, DnaK and GrpE are required for fully efficient folding. Also involved, together with DnaK and GrpE, in the DNA replication of plasmids through activation of initiation proteins. This Wolbachia pipientis subsp. Culex pipiens (strain wPip) protein is Chaperone protein DnaJ.